A 1218-amino-acid polypeptide reads, in one-letter code: Structural maintenance of chromosomes protein 2 (1218 aa).

Position 32 to 39 (32 to 39) interacts with ATP; that stretch reads GLNGSGKS. Residues 209–517 adopt a coiled-coil conformation; the sequence is VKLKKEKEEY…INSVKIDYKI (309 aa). In terms of domain architecture, SMC hinge spans 525 to 654; the sequence is DVLGQIYKLI…CSNVDLCKKI (130 aa). 2 coiled-coil regions span residues 693–949 and 978–1045; these read LNYE…DTVK and RHDV…KKSE.

Belongs to the SMC family. SMC2 subfamily.

The protein localises to the nucleus. In terms of biological role, may play a role in the conversion of interphase chromatin into condensed chromosomes. The chain is Structural maintenance of chromosomes protein 2 from Plasmodium falciparum (isolate 3D7).